Here is a 777-residue protein sequence, read N- to C-terminus: MNNSLENTISFEEYIRVKARSVPQHRMKEFLDSLASKGPEALQEFQQTATTTMVYQQGGNCIYTDSTEVAGSLLELACPVTTSVQPQTQQEQQIQVQQPQQVQVQVQVQQSPQQVSAQQLSPQFTVHQPAEQPIQVQVQIQGQAPQSAAPSIQTPSLQSPSPSQLQAAQIQVQHVQAAQQIQAAEIPEEHIPHQQIQAQLVAGQSLAGGQQIQIQTVGALSPPPSQQGSPREGERRVGTASVLQPVKKRKVDMPITVSYAISGQPVATVLAIPQGQQQSYVSLRPDLLTVDSAHLYSATGTITSPTGETWTIPVYSAQPRGDPQQQSITHIAIPQEAYNAVHVSGSPKALAAVKLEDDKEKMVGTTSVVKNSHEEVVQTLANSLFPAQFMNGNIHIPVAVQAVAGTYQNTAQTVHIWDPQQQPQQQTAQEQTPPPQQQQQQLQVTCSAQTVQVAEVEPQSQPQPSPELLLPNSLKPEEGLEVWKNWAQTKNAELEKDAQNRLAPIGRRQLLRFQEDLISSAVAELNYGLCLMTREARNGEGEPYDPDVLYYIFLCIQKYLFENGRVDDIFSDLYYVRFTEWLHEVLKDVQPRVTPLGYVLPSHVTEEMLWECKQLGAHSPSTLLTTLMFFNTKYFLLKTVDQHMKLAFSKVLRQTKKSPSNPKDKSTSIRYLKALGIHQTGQKVTDDMYAEQTENPENPLRCPIKLYDFYLFKCPQSVKGRNDTFYLTPEPVVAPNSPIWYSVQPISREQMGQMLTRILVIREIQEAIAVANATTMH.

Residue Met-1 is modified to N-acetylmethionine. One can recognise a CARD domain in the interval Glu-6–Thr-48. Disordered stretches follow at residues Ile-140–Gln-164 and Ala-219–Ala-240. At Ser-346 the chain carries Phosphoserine. Residues Lys-354 and Lys-359 each participate in a glycyl lysine isopeptide (Lys-Gly) (interchain with G-Cter in SUMO2) cross-link. The segment at Gln-420–Gln-440 is disordered. Ser-465 carries the phosphoserine modification.

As to expression, expressed highly in prefrontal cortex, craniofacial area and near the limbs of mouse embryos. Expressed in heart, skeletal muscle, liver, kidney, lung, brain, spleen, intestine and growth plate in mice.

The protein localises to the nucleus. Its subcellular location is the cytoplasm. It localises to the cell membrane. Its function is as follows. Transcriptional regulator that acts as a mediator of the integrated stress response (ISR) through transcriptional control of protein homeostasis under conditions of ER stress. Controls the outcome of the unfolded protein response (UPR), an ER-stress response pathway that either promotes recovery of ER homeostasis and cell survival, or triggers the terminal UPR which elicits programmed cell death when ER stress is prolonged and unresolved. ER stress induces QRICH1 translation by a ribosome translation re-initiation mechanism in response to EIF2S1/eIF-2-alpha phosphorylation, and stress-induced QRICH1 regulates a transcriptional program associated with protein translation, protein secretion-mediated proteotoxicity and cell death during the terminal UPR. May cooperate with ATF4 transcription factor signaling to regulate ER homeostasis which is critical for cell viability. Up-regulates CASP3/caspase-3 activity in epithelial cells under ER stress. Central regulator of proteotoxicity associated with ER stress-mediated inflammatory diseases in the intestines and liver. Involved in chondrocyte hypertrophy, a process required for normal longitudinal bone growth. The chain is Transcriptional regulator QRICH1 from Mus musculus (Mouse).